The primary structure comprises 194 residues: Large ribosomal subunit protein bL9 (194 aa).

This sequence belongs to the bacterial ribosomal protein bL9 family.

Functionally, binds to the 23S rRNA. This is Large ribosomal subunit protein bL9 from Paracoccus denitrificans (strain Pd 1222).